Here is a 455-residue protein sequence, read N- to C-terminus: Protein chibby homolog 2 (455 aa).

Phosphoserine is present on residues S41, S86, S89, S97, S124, S144, S148, and S150. A coiled-coil region spans residues 160 to 197 (KRLAKECLLQENKTLREENRALREENRMLRKENKILQV). Phosphoserine occurs at positions 211 and 225. Positions 240 to 266 (GRENSTLQLLREENRALQQLLEQRKAY) form a coiled coil. The tract at residues 267–318 (WAQPDEKAASTEEIKPISSPHEEPHGLLPDPGPGLPSPFEEPKGLPAPPDDS) is disordered. Residues 270 to 291 (PDEKAASTEEIKPISSPHEEPH) are compositionally biased toward basic and acidic residues. A phosphoserine mark is found at S276 and S332. The stretch at 350-421 (SQSLELLREM…KLKLQQKLVI (72 aa)) forms a coiled coil.

Belongs to the chibby family. SPERT subfamily. Homodimer. Binds to NEK1.

The sequence is that of Protein chibby homolog 2 (CBY2) from Bos taurus (Bovine).